Consider the following 1592-residue polypeptide: Serine/threonine-protein kinase mrck-1 (1592 aa).

Positions 1–954 (MAEPPPDDSA…IFSPVSISAM (954 aa)) are involved in homo-dimerization. A Protein kinase domain is found at 83-351 (FEVLKVIGKG…LSDFQLHPFF (269 aa)). ATP is bound by residues 89 to 97 (IGKGAFGEV) and Lys112. Catalysis depends on Asp207, which acts as the Proton acceptor. An AGC-kinase C-terminal domain is found at 352-426 (EGIDWNTIRD…THGSLLSDAR (75 aa)). Ser415 is subject to Phosphoserine. Position 416 is a phosphotyrosine (Tyr416). 2 coiled-coil regions span residues 444–782 (ELME…KNNS) and 811–871 (LDLQ…IENS). Residues 782 to 796 (SPLTTSNYIQNTPSG) are compositionally biased toward polar residues. Residues 782 to 801 (SPLTTSNYIQNTPSGWGSRR) are disordered. The interval 955-1534 (ERGHNFERMK…FRTIGKDDRS (580 aa)) is involved in binding to membranes, with a preference for di-phosphorylated phosphoinositides (PIPs). The Phorbol-ester/DAG-type zinc finger occupies 957–1007 (GHNFERMKIKTPTKCGHCTSILIGLDRQGLFCQSCQYACHVSCAERVSQSC). Residues His958, Cys971, Cys974, Cys988, Cys991, His996, Cys999, and Cys1007 each coordinate Zn(2+). The region spanning 1026–1154 (GTAYEGLVKT…WVVALSELKT (129 aa)) is the PH domain. The region spanning 1181–1479 (IRVAQCCAII…KPLSGDGILS (299 aa)) is the CNH domain. One can recognise a CRIB domain in the interval 1544-1557 (ISTPSDFMHIVHMG). The interval 1544–1557 (ISTPSDFMHIVHMG) is involved in interaction with cdc-42 (GTP-bound). Deletion prevents rescue of a null mutant; furthermore deleted form of mrck-1 is no longer recruited to the cell cortex and instead appears to be completely cytoplasmic.

Belongs to the protein kinase superfamily. AGC Ser/Thr protein kinase family. DMPK subfamily. In terms of assembly, homodimer, via N-terminal domains. Interacts (via the CRIB domain) with cdc-42 (GTP-bound), but with a lower affinity for cdc-42 bound to GDP; the interaction is direct and may play a role in the recruitment of mrck-1 to the apical membrane. It depends on Mg(2+) as a cofactor. In terms of tissue distribution, expressed in embryonic and L4 larval seam cells and in embryonic dorsal and ventral epidermal cells. Also expressed in the pharynx throughout development and in sublateral nerve cords in the L4 larva.

The protein resides in the cytoplasm. Its subcellular location is the cell cortex. The enzyme catalyses L-seryl-[protein] + ATP = O-phospho-L-seryl-[protein] + ADP + H(+). The catalysed reaction is L-threonyl-[protein] + ATP = O-phospho-L-threonyl-[protein] + ADP + H(+). In terms of biological role, serine/threonine-protein kinase. Involved in regulating endoderm precursor cell movements during early gastrulation; activates apical myosin and thereby increases actomyosin contractility and tension in the apical cell cortex, probably as a result of recruitment of mrck-1 to the cortex by a combination of interaction with active cdc-42 and membrane binding. May phosphorylate and inactivate the phosphatase mel-11, and thereby contribute to the regulation of myosin II contractility during embryonic elongation. Involved in controlling canal length and Golgi/ER integrity during excretory canal elongation. This is Serine/threonine-protein kinase mrck-1 from Caenorhabditis elegans.